The primary structure comprises 442 residues: Coiled-coil domain-containing protein 91 (442 aa).

A GGA1-binding motif region spans residues 1–16; sequence MDDDDFGGFEAAETFD. Residues 1–27 are disordered; that stretch reads MDDDDFGGFEAAETFDGEQGGNQAVSP. Phosphoserine is present on residues Ser-43 and Ser-46. The segment at 48–79 is disordered; sequence ELILDHDRSSPSSGHLRSDAVISSPDDTRADS. 2 coiled-coil regions span residues 127–213 and 248–409; these read GVHV…ALSI and CEEL…RLDQ. The tract at residues 211–414 is homodimerization; sequence LSIIVDEYKA…RRLDQVTRQR (204 aa).

Homodimer. Interacts with GGA1, GGA2 and AP1G1.

The protein resides in the membrane. Its subcellular location is the golgi apparatus. The protein localises to the trans-Golgi network membrane. It localises to the trans-Golgi network. Involved in the regulation of membrane traffic through the trans-Golgi network (TGN). Functions in close cooperation with the GGAs in the sorting of hydrolases to lysosomes. This chain is Coiled-coil domain-containing protein 91 (Ccdc91), found in Rattus norvegicus (Rat).